Consider the following 291-residue polypeptide: NAD kinase (291 aa).

Residue aspartate 72 is the Proton acceptor of the active site. NAD(+)-binding positions include 72 to 73, 146 to 147, arginine 157, arginine 174, aspartate 176, 187 to 192, and glutamine 247; these read DG, ND, and TAYSLS.

It belongs to the NAD kinase family. It depends on a divalent metal cation as a cofactor.

It localises to the cytoplasm. It carries out the reaction NAD(+) + ATP = ADP + NADP(+) + H(+). Involved in the regulation of the intracellular balance of NAD and NADP, and is a key enzyme in the biosynthesis of NADP. Catalyzes specifically the phosphorylation on 2'-hydroxyl of the adenosine moiety of NAD to yield NADP. The polypeptide is NAD kinase (Hydrogenovibrio crunogenus (strain DSM 25203 / XCL-2) (Thiomicrospira crunogena)).